A 207-amino-acid chain; its full sequence is 8-oxoguanine DNA glycosylase/AP lyase (207 aa).

Active-site residues include lysine 129 and aspartate 147.

This sequence belongs to the type-2 OGG1 family.

The catalysed reaction is 2'-deoxyribonucleotide-(2'-deoxyribose 5'-phosphate)-2'-deoxyribonucleotide-DNA = a 3'-end 2'-deoxyribonucleotide-(2,3-dehydro-2,3-deoxyribose 5'-phosphate)-DNA + a 5'-end 5'-phospho-2'-deoxyribonucleoside-DNA + H(+). Its function is as follows. Catalyzes the excision of an oxidatively damaged form of guanine (7,8-dihydro-8-oxoguanine = 8-oxoG) from DNA. Also cleaves the DNA backbone at apurinic/apyrimidinic sites (AP sites). This is 8-oxoguanine DNA glycosylase/AP lyase from Thermotoga sp. (strain RQ2).